A 445-amino-acid chain; its full sequence is MYPNPLIYCTCWDPWNLGPRKLIKTPQLPRKNSTGSSKLTPLVPAPKNHNYLQPTKPVVSPKMKIHSARQEETNKSFYEVINVSPGYQLVRNREQISVTLGDEMFDRKKRWESEIPDKGRFSRTNIISDLEEQISELTAIIEQMNRDHQSAQKLLSSEMDLRCAEMKQNFENKNRELKEAHEAELSELENNYKAALKAEKLAAQEKLEEMGKEYKYLKNMFRTYQDSIYDEMEEKWSKQKAKWKKDEKFERENILLQQKKKMTKKFEMESGEEDKKINESCSAVFENFIQEKEELLKQHQSDTLQLEELRKTKEVPWRRDQINRHWHDVLQQLLLMQVMQEELHAQALILESLNTNLYYTQLELQKEKAIVGNLEKMLQTKFAETEEKYKHTIQILTEENIHLKQKIISKNEEICEGCSGRLASITVSKDDSDTVQDGSKKGQES.

The interval 26-47 (PQLPRKNSTGSSKLTPLVPAPK) is disordered. Residues 30 to 39 (RKNSTGSSKL) are compositionally biased toward polar residues. Coiled-coil stretches lie at residues 122–226 (SRTN…TYQD) and 283–315 (AVFE…TKEV). K376 is modified (N6-acetyllysine). A coiled-coil region spans residues 387-414 (EKYKHTIQILTEENIHLKQKIISKNEEI).

It is found in the cytoplasm. It localises to the cytoplasmic granule. Its subcellular location is the cell projection. The protein localises to the cilium. The protein resides in the flagellum. In Homo sapiens (Human), this protein is Flagellum-associated coiled-coil domain-containing protein 1.